The sequence spans 293 residues: uncharacterized protein (293 aa).

Residues 1-10 (MHMQLRKRKR) are compositionally biased toward basic residues. The segment at 1-28 (MHMQLRKRKRVDYSGRNQTSDPPSTTTA) is disordered. Polar residues predominate over residues 15–28 (GRNQTSDPPSTTTA).

The protein resides in the nucleus. This is an uncharacterized protein from Saccharomyces cerevisiae (strain ATCC 204508 / S288c) (Baker's yeast).